The sequence spans 281 residues: 2,3,4,5-tetrahydropyridine-2,6-dicarboxylate N-succinyltransferase (281 aa).

The substrate site is built by Arg-108 and Asp-145.

Belongs to the transferase hexapeptide repeat family. In terms of assembly, homotrimer.

It localises to the cytoplasm. The catalysed reaction is (S)-2,3,4,5-tetrahydrodipicolinate + succinyl-CoA + H2O = (S)-2-succinylamino-6-oxoheptanedioate + CoA. Its pathway is amino-acid biosynthesis; L-lysine biosynthesis via DAP pathway; LL-2,6-diaminopimelate from (S)-tetrahydrodipicolinate (succinylase route): step 1/3. The sequence is that of 2,3,4,5-tetrahydropyridine-2,6-dicarboxylate N-succinyltransferase from Nitrobacter hamburgensis (strain DSM 10229 / NCIMB 13809 / X14).